We begin with the raw amino-acid sequence, 380 residues long: Palmitoyltransferase ZDHHC20 (380 aa).

At 1–14 (MAPWTLWRCCQRVV) the chain is on the cytoplasmic side. Residues 15-35 (GWVPVLFITFVVVWSYYAYVV) traverse the membrane as a helical segment. The Lumenal segment spans residues 36-53 (ELCVSTISRTGEKGKTVV). The chain crosses the membrane as a helical span at residues 54 to 74 (YLVAFHLFFVMFVWSYWMTIF). Topologically, residues 75–169 (TSPASPSKEF…NNCVGFTNYK (95 aa)) are cytoplasmic. Positions 126 to 176 (RYCEKCQLIKPDRAHHCSACDRCVLKMDHHCPWVNNCVGFTNYKFFMLFLL) constitute a DHHC domain. Residues Cys-128 and Cys-131 each contribute to the Zn(2+) site. Residues Lys-135 and 140-143 (HHCS) contribute to the substrate site. Zn(2+) contacts are provided by His-141, Cys-142, Cys-145, Cys-148, and His-155. The active-site S-palmitoyl cysteine intermediate is the Cys-156. Cys-162 lines the Zn(2+) pocket. A helical membrane pass occupies residues 170–190 (FFMLFLLYSLLYCLFVAATVL). Over 191–222 (EYFIKFWTLCRRKSTENCPKNEPTVLNFPSAK) the chain is Lumenal. A helical membrane pass occupies residues 223–246 (FHVLFLFFVSAMFFVSVLSLFSYH). Topologically, residues 247–380 (CWLVGKNRTT…NNHVTVEIEN (134 aa)) are cytoplasmic. 3 positions are modified to phosphoserine: Ser-320, Ser-345, and Ser-354.

The protein belongs to the DHHC palmitoyltransferase family. Post-translationally, autopalmitoylated (in vitro). In terms of tissue distribution, highest levels in lung.

The protein resides in the golgi apparatus membrane. Its subcellular location is the cell membrane. It is found in the cytoplasm. It localises to the perinuclear region. The protein localises to the endoplasmic reticulum membrane. The protein resides in the endoplasmic reticulum-Golgi intermediate compartment membrane. The catalysed reaction is L-cysteinyl-[protein] + hexadecanoyl-CoA = S-hexadecanoyl-L-cysteinyl-[protein] + CoA. It carries out the reaction L-cysteinyl-[protein] + tetradecanoyl-CoA = S-tetradecanoyl-L-cysteinyl-[protein] + CoA. It catalyses the reaction L-cysteinyl-[protein] + octadecanoyl-CoA = S-octadecanoyl-L-cysteinyl-[protein] + CoA. Palmitoyltransferase that could catalyze the addition of palmitate onto various protein substrates. Catalyzes palmitoylation of Cys residues in the cytoplasmic C-terminus of EGFR, and modulates the duration of EGFR signaling by modulating palmitoylation-dependent EGFR internalization and degradation. Has a preference for acyl-CoA with C16 fatty acid chains. Can also utilize acyl-CoA with C14 and C18 fatty acid chains. May palmitoylate CALHM1 subunit of gustatory voltage-gated ion channels and modulate channel gating and kinetics. The sequence is that of Palmitoyltransferase ZDHHC20 from Mus musculus (Mouse).